Consider the following 158-residue polypeptide: Leptin-B (158 aa).

A signal peptide spans 1–19 (MYMPLALVYASFLTLPAST). Cysteine 114 and cysteine 158 form a disulfide bridge.

Belongs to the leptin family. As to expression, highly expressed in the brain and eye. Expressed at low levels in muscle and skin.

Its subcellular location is the secreted. In terms of biological role, may function as part of a signaling pathway that acts to regulate the size of the body fat depot. In Oryzias latipes (Japanese rice fish), this protein is Leptin-B.